The following is a 418-amino-acid chain: Enolase 1 (418 aa).

Glutamine 162 lines the (2R)-2-phosphoglycerate pocket. Glutamate 204 (proton donor) is an active-site residue. Aspartate 241, glutamate 285, and aspartate 312 together coordinate Mg(2+). Residues lysine 337, arginine 366, serine 367, and lysine 388 each coordinate (2R)-2-phosphoglycerate. Catalysis depends on lysine 337, which acts as the Proton acceptor.

Belongs to the enolase family. Requires Mg(2+) as cofactor.

It localises to the cytoplasm. Its subcellular location is the secreted. The protein localises to the cell surface. It carries out the reaction (2R)-2-phosphoglycerate = phosphoenolpyruvate + H2O. It participates in carbohydrate degradation; glycolysis; pyruvate from D-glyceraldehyde 3-phosphate: step 4/5. Catalyzes the reversible conversion of 2-phosphoglycerate (2-PG) into phosphoenolpyruvate (PEP). It is essential for the degradation of carbohydrates via glycolysis. This chain is Enolase 1, found in Lactococcus lactis subsp. cremoris (strain SK11).